The following is a 130-amino-acid chain: Small ribosomal subunit protein uS9 (130 aa).

This sequence belongs to the universal ribosomal protein uS9 family.

In Lawsonia intracellularis (strain PHE/MN1-00), this protein is Small ribosomal subunit protein uS9.